Consider the following 370-residue polypeptide: Germination protease (370 aa).

The propeptide occupies 1-15 (MEKELDLSQYSVRTD).

The protein belongs to the peptidase A25 family. Homotetramer. In terms of processing, autoproteolytically processed. The inactive tetrameric zymogen termed p46 autoprocesses to a smaller form termed p41, which is active only during spore germination.

It catalyses the reaction Endopeptidase action with P4 Glu or Asp, P1 preferably Glu &gt; Asp, P1' hydrophobic and P2' Ala.. Functionally, initiates the rapid degradation of small, acid-soluble proteins during spore germination. This Priestia megaterium (strain ATCC 12872 / QMB1551) (Bacillus megaterium) protein is Germination protease (gpr).